The primary structure comprises 278 residues: HTH-type transcriptional activator RhaS (278 aa).

Residues 174–272 enclose the HTH araC/xylS-type domain; sequence NLLLAWLEDH…NWSPRDIRQG (99 aa). 2 DNA-binding regions (H-T-H motif) span residues 191-212 and 239-262; these read DAVA…KQKT and VTDI…RREF.

As to quaternary structure, binds DNA as a dimer.

Its subcellular location is the cytoplasm. Activates expression of the rhaBAD and rhaT operons. The chain is HTH-type transcriptional activator RhaS from Escherichia coli O45:K1 (strain S88 / ExPEC).